The following is a 396-amino-acid chain: Methylthioribose kinase (396 aa).

ATP contacts are provided by residues Asn-44, Lys-61, and 115-117 (EDL). Asp-233 is a substrate binding site. 250–252 (DPE) provides a ligand contact to ATP. Arg-340 is a substrate binding site.

Belongs to the methylthioribose kinase family. As to quaternary structure, homodimer.

The enzyme catalyses 5-(methylsulfanyl)-D-ribose + ATP = 5-(methylsulfanyl)-alpha-D-ribose 1-phosphate + ADP + H(+). Its pathway is amino-acid biosynthesis; L-methionine biosynthesis via salvage pathway; S-methyl-5-thio-alpha-D-ribose 1-phosphate from S-methyl-5'-thioadenosine (hydrolase route): step 2/2. Catalyzes the phosphorylation of methylthioribose into methylthioribose-1-phosphate. The chain is Methylthioribose kinase from Geobacillus thermodenitrificans (strain NG80-2).